Here is a 218-residue protein sequence, read N- to C-terminus: Ras-related protein RABE1e (218 aa).

Position 22 to 29 (22 to 29) interacts with GTP; sequence GDSGVGKS. Positions 44–52 match the Effector region motif; it reads FITTIGIDF. GTP-binding positions include 70–74, 128–131, and 159–160; these read DTAGQ, NKAD, and SA. The disordered stretch occupies residues 182–218; the sequence is TESDTKAEPQGIKITKQDANKASSSSTNEKSACCSYV. Positions 201–211 are enriched in polar residues; it reads NKASSSSTNEK. S-geranylgeranyl cysteine attachment occurs at residues Cys-214 and Cys-215.

Belongs to the small GTPase superfamily. Rab family. In terms of assembly, interacts with PI5K2.

Its subcellular location is the golgi apparatus membrane. It is found in the cell membrane. Involved in membrane trafficking from the Golgi to the plasma membrane. This chain is Ras-related protein RABE1e (RABE1E), found in Arabidopsis thaliana (Mouse-ear cress).